Consider the following 216-residue polypeptide: Cytidylate kinase (216 aa).

Position 7 to 15 (7 to 15) interacts with ATP; that stretch reads GPAGTGKST.

The protein belongs to the cytidylate kinase family. Type 1 subfamily.

It localises to the cytoplasm. The enzyme catalyses CMP + ATP = CDP + ADP. It carries out the reaction dCMP + ATP = dCDP + ADP. This chain is Cytidylate kinase, found in Chlamydia muridarum (strain MoPn / Nigg).